Consider the following 107-residue polypeptide: Large ribosomal subunit protein uL24 (107 aa).

This sequence belongs to the universal ribosomal protein uL24 family. As to quaternary structure, part of the 50S ribosomal subunit.

In terms of biological role, one of two assembly initiator proteins, it binds directly to the 5'-end of the 23S rRNA, where it nucleates assembly of the 50S subunit. Functionally, one of the proteins that surrounds the polypeptide exit tunnel on the outside of the subunit. The chain is Large ribosomal subunit protein uL24 from Thermoanaerobacter pseudethanolicus (strain ATCC 33223 / 39E) (Clostridium thermohydrosulfuricum).